Here is a 335-residue protein sequence, read N- to C-terminus: Heat-inducible transcription repressor HrcA (335 aa).

The protein belongs to the HrcA family.

In terms of biological role, negative regulator of class I heat shock genes (grpE-dnaK-dnaJ and groELS operons). Prevents heat-shock induction of these operons. The sequence is that of Heat-inducible transcription repressor HrcA from Mesomycoplasma hyopneumoniae (strain 232) (Mycoplasma hyopneumoniae).